We begin with the raw amino-acid sequence, 235 residues long: Regulator of G-protein signaling 18 (235 aa).

S49 carries the phosphoserine modification. One can recognise an RGS domain in the interval 86–202 (SFDKLLSHRD…LKSEIYLHLI (117 aa)). 2 positions are modified to phosphoserine: S216 and S218.

It localises to the cytoplasm. In terms of biological role, inhibits signal transduction by increasing the GTPase activity of G protein alpha subunits thereby driving them into their inactive GDP-bound form. Binds to G(i) alpha-1, G(i) alpha-2, G(i) alpha-3 and G(q) alpha. In Rattus norvegicus (Rat), this protein is Regulator of G-protein signaling 18 (Rgs18).